Consider the following 226-residue polypeptide: Myosin regulatory light chain 10 (226 aa).

3 consecutive EF-hand domains span residues Asn84 to Ile119, Asp154 to Arg189, and Phe190 to Lys225. Ca(2+) contacts are provided by Asp97, Asn99, Asp101, and Asp108.

As to quaternary structure, myosin is a hexamer of 2 heavy chains and 4 light chains.

The polypeptide is Myosin regulatory light chain 10 (MYL10) (Homo sapiens (Human)).